A 258-amino-acid chain; its full sequence is SLA class II histocompatibility antigen, DQ haplotype D beta chain (258 aa).

Residues 1–31 form the signal peptide; the sequence is MVALRLPRGLWTAALTVMLVVLGAPVAEGRD. The tract at residues 32-123 is beta-1; sequence SPQDFVVQFK…IEEGTTLQRR (92 aa). Topologically, residues 32–227 are extracellular; it reads SPQDFVVQFK…RAQSESAQSK (196 aa). Cystine bridges form between cysteine 44-cysteine 108 and cysteine 146-cysteine 202. Asparagine 48 carries an N-linked (GlcNAc...) asparagine glycan. Residues 124–217 are beta-2; it reads VQPTVTISPS…SLQSPILVEW (94 aa). In terms of domain architecture, Ig-like C1-type spans 126–230; it reads PTVTISPSKA…SESAQSKMLS (105 aa). The segment at 218-227 is connecting peptide; it reads RAQSESAQSK. The chain crosses the membrane as a helical span at residues 228–248; the sequence is MLSGVGGFVLGLIFLGLGLFI. The Cytoplasmic segment spans residues 249-258; sequence RHRSQKGLVR.

The protein belongs to the MHC class II family.

It is found in the membrane. In Sus scrofa (Pig), this protein is SLA class II histocompatibility antigen, DQ haplotype D beta chain.